Here is a 159-residue protein sequence, read N- to C-terminus: ATP synthase subunit b 2 (159 aa).

The helical transmembrane segment at 1 to 21 threads the bilayer; that stretch reads MDATFWALVALIIFVGILLYM.

Belongs to the ATPase B chain family. F-type ATPases have 2 components, F(1) - the catalytic core - and F(0) - the membrane proton channel. F(1) has five subunits: alpha(3), beta(3), gamma(1), delta(1), epsilon(1). F(0) has three main subunits: a(1), b(2) and c(10-14). The alpha and beta chains form an alternating ring which encloses part of the gamma chain. F(1) is attached to F(0) by a central stalk formed by the gamma and epsilon chains, while a peripheral stalk is formed by the delta and b chains.

Its subcellular location is the cell inner membrane. In terms of biological role, f(1)F(0) ATP synthase produces ATP from ADP in the presence of a proton or sodium gradient. F-type ATPases consist of two structural domains, F(1) containing the extramembraneous catalytic core and F(0) containing the membrane proton channel, linked together by a central stalk and a peripheral stalk. During catalysis, ATP synthesis in the catalytic domain of F(1) is coupled via a rotary mechanism of the central stalk subunits to proton translocation. Functionally, component of the F(0) channel, it forms part of the peripheral stalk, linking F(1) to F(0). The chain is ATP synthase subunit b 2 from Chelativorans sp. (strain BNC1).